The primary structure comprises 295 residues: Cyclic dipyrimidine nucleotide synthase CdnE (295 aa).

A disordered region spans residues 1–25 (MSIDWEQTFRKWSKPSSETESTKAE). The UTP site is built by Q51, S53, and N59. D65 and D67 together coordinate Mg(2+). 3 residues coordinate UTP: D67, D124, and K125. Residues D128 and D139 each coordinate Mg(2+). 4 residues coordinate UTP: D139, N173, K201, and S220. The Pyrimidine specificity motif (R/Q)xW in donor pocket signature appears at 274 to 276 (QMW).

The protein belongs to the CD-NTase family. E02 subfamily. Mg(2+) is required as a cofactor.

The catalysed reaction is 2 UTP = c-di-UMP + 2 diphosphate. It carries out the reaction UTP + CTP = cyclic CMP-UMP + 2 diphosphate. Its function is as follows. Cyclic nucleotide synthase (second messenger synthase) of a CBASS antivirus system. CBASS (cyclic oligonucleotide-based antiphage signaling system) provides immunity against bacteriophage. The CD-NTase protein synthesizes cyclic nucleotides in response to infection; these serve as specific second messenger signals. The signals activate a diverse range of effectors, leading to bacterial cell death and thus abortive phage infection. A type I-B(UU) CBASS system. Functionally, cyclic dinucleotide synthase that catalyzes the synthesis of 3',3'-cyclic UMP-UMP (c-di-UMP) as the major product, and of 3',3'-cyclic CMP-UMP as a minor product, which are second messengers for cell signal transduction. This is Cyclic dipyrimidine nucleotide synthase CdnE from Legionella pneumophila.